We begin with the raw amino-acid sequence, 640 residues long: Threonine--tRNA ligase (640 aa).

Positions 1–61 (MPTITLPDGS…ENDASLQIIT (61 aa)) constitute a TGS domain. The segment at 242–533 (DHRKIGKRLG…LIEHYEGAFP (292 aa)) is catalytic. Zn(2+) is bound by residues Cys-333, His-384, and His-510.

It belongs to the class-II aminoacyl-tRNA synthetase family. In terms of assembly, homodimer. Zn(2+) is required as a cofactor.

Its subcellular location is the cytoplasm. It carries out the reaction tRNA(Thr) + L-threonine + ATP = L-threonyl-tRNA(Thr) + AMP + diphosphate + H(+). In terms of biological role, catalyzes the attachment of threonine to tRNA(Thr) in a two-step reaction: L-threonine is first activated by ATP to form Thr-AMP and then transferred to the acceptor end of tRNA(Thr). Also edits incorrectly charged L-seryl-tRNA(Thr). The sequence is that of Threonine--tRNA ligase from Pseudomonas syringae pv. syringae (strain B728a).